The sequence spans 862 residues: Linoleate 9S-lipoxygenase 1 (862 aa).

In terms of domain architecture, PLAT spans 44–171 (FGAATDIVGG…SYKRDRIFFA (128 aa)). The Lipoxygenase domain occupies 174–862 (TYLPNETPAS…FRGIPNSISI (689 aa)). The segment at 225 to 257 (KNLARTTLGGSSDFPYPRRGRTGRKSTRKDPKC) is disordered. Positions 242–251 (RRGRTGRKST) are enriched in basic residues. 5 residues coordinate Fe cation: His-522, His-527, His-713, Asn-717, and Ile-862.

The protein belongs to the lipoxygenase family. In terms of assembly, monomer. Fe cation is required as a cofactor.

Its subcellular location is the cytoplasm. It carries out the reaction (9Z,12Z)-octadecadienoate + O2 = (13S)-hydroperoxy-(9Z,11E)-octadecadienoate. The catalysed reaction is (9Z,12Z,15Z)-octadecatrienoate + O2 = (13S)-hydroperoxy-(9Z,11E,15Z)-octadecatrienoate. It catalyses the reaction (9Z,12Z)-octadecadienoate + O2 = (9S)-hydroperoxy-(10E,12Z)-octadecadienoate. It participates in lipid metabolism; oxylipin biosynthesis. Its function is as follows. Plant lipoxygenase may be involved in a number of diverse aspects of plant physiology including growth and development, pest resistance, and senescence or responses to wounding. It catalyzes the hydroperoxidation of lipids containing a cis,cis-1,4-pentadiene structure. The polypeptide is Linoleate 9S-lipoxygenase 1 (LOXA) (Phaseolus vulgaris (Kidney bean)).